We begin with the raw amino-acid sequence, 305 residues long: Ribosomal RNA small subunit methyltransferase H (305 aa).

Residues 30–32 (GGH), Asp49, Phe74, Asp96, and Gln103 contribute to the S-adenosyl-L-methionine site.

This sequence belongs to the methyltransferase superfamily. RsmH family.

It localises to the cytoplasm. The catalysed reaction is cytidine(1402) in 16S rRNA + S-adenosyl-L-methionine = N(4)-methylcytidine(1402) in 16S rRNA + S-adenosyl-L-homocysteine + H(+). Functionally, specifically methylates the N4 position of cytidine in position 1402 (C1402) of 16S rRNA. This chain is Ribosomal RNA small subunit methyltransferase H, found in Francisella tularensis subsp. novicida (strain U112).